We begin with the raw amino-acid sequence, 666 residues long: MDSGATSFNVLGEWRRTVQSKLLGERHVGFVAEENKLHCGSIKDRDSVVLTPIANIQQGTVNYNHMFDNLIWVSDVQFMEELQYTLISSPFLNDIHHHQMPLSVANSIMDFHRDRRFHRESFIFSVPTKLGYLKARYGDKKLELRKNINFMDVHKTVYSILKHLRNNNKKCTWRILSVLMIILYLGYEQAHFHNQYPKYSFLTQLKAMMGKLQQFDSIQRKYFENINITKEFDKTGNEIFQLLHSITHIASMKLYHLSEFLLRFTNIGKLSKYCGVYGIDMNLAYLTNVRILTSTKQELHLLQDKIEFLRKFLLCCFLSVEHQDYNEKVKNIIFSTYLLKLFPGYTEDNNCKSLFSSQWSVLSTVIVKFNQDLSFLYSVLNENKELIYSTETREESETDEMLKERYKFRYKDKNQSLMLKALSQIHLVEEQLISVQDADDNEETKCLINDHIKNLQQLILCCNNKTNSGTNFSNRHTSLQGKGLFLDVLKSPEEKFTPIFQEMEVSRIGIKNVSDNDDLESILTDNENYEHIEPAHFIDDRNNGGAFTIYEDSTCYADDCYKNASELRKLNDEQLRRKLNEKIQLFATENKKNRNQIRQQKSLELLRSNSTLTALNELKSNTNYESLDKGVKTKKRAHFMEQELYSEETIPFYYEINDFLYNQANQ.

The helical transmembrane segment at 171 to 187 (CTWRILSVLMIILYLGY) threads the bilayer. Residues N227, N414, N464, N471, N512, N563, and N609 are each glycosylated (N-linked (GlcNAc...) asparagine).

Belongs to the INP2 family.

The protein resides in the peroxisome membrane. In terms of biological role, required for peroxisome inheritance. This is Inheritance of peroxisomes protein 2 (INP2) from Candida glabrata (strain ATCC 2001 / BCRC 20586 / JCM 3761 / NBRC 0622 / NRRL Y-65 / CBS 138) (Yeast).